A 262-amino-acid polypeptide reads, in one-letter code: Hydroxyethylthiazole kinase (262 aa).

Met43 is a substrate binding site. Arg118 and Thr164 together coordinate ATP. A substrate-binding site is contributed by Ala191.

It belongs to the Thz kinase family. It depends on Mg(2+) as a cofactor.

The catalysed reaction is 5-(2-hydroxyethyl)-4-methylthiazole + ATP = 4-methyl-5-(2-phosphooxyethyl)-thiazole + ADP + H(+). It functions in the pathway cofactor biosynthesis; thiamine diphosphate biosynthesis; 4-methyl-5-(2-phosphoethyl)-thiazole from 5-(2-hydroxyethyl)-4-methylthiazole: step 1/1. Catalyzes the phosphorylation of the hydroxyl group of 4-methyl-5-beta-hydroxyethylthiazole (THZ). The chain is Hydroxyethylthiazole kinase from Cereibacter sphaeroides (strain KD131 / KCTC 12085) (Rhodobacter sphaeroides).